The sequence spans 423 residues: Large ribosomal subunit protein mL37 (423 aa).

The transit peptide at 1–29 (MALASGPARRALAGSGQLGLGGFGAPRRG) directs the protein to the mitochondrion.

Belongs to the mitochondrion-specific ribosomal protein mL37 family. In terms of assembly, component of the mitochondrial large ribosomal subunit (mt-LSU). Mature mammalian 55S mitochondrial ribosomes consist of a small (28S) and a large (39S) subunit. The 28S small subunit contains a 12S ribosomal RNA (12S mt-rRNA) and 30 different proteins. The 39S large subunit contains a 16S rRNA (16S mt-rRNA), a copy of mitochondrial valine transfer RNA (mt-tRNA(Val)), which plays an integral structural role, and 52 different proteins. mL37 forms a heterodimer with mL65.

It is found in the mitochondrion. This is Large ribosomal subunit protein mL37 (MRPL37) from Homo sapiens (Human).